The sequence spans 359 residues: Photosystem II protein D1 2 (359 aa).

The next 3 membrane-spanning stretches (helical) occupy residues Tyr-29 to Thr-46, His-118 to Leu-133, and Trp-142 to Ala-156. His-118 is a binding site for chlorophyll a. Tyr-126 provides a ligand contact to pheophytin a. Residues Asp-170 and Glu-189 each contribute to the [CaMn4O5] cluster site. A helical membrane pass occupies residues Phe-197 to Leu-218. Position 198 (His-198) interacts with chlorophyll a. A quinone is bound by residues His-215 and Ser-264 to Phe-265. His-215 contacts Fe cation. His-272 contributes to the Fe cation binding site. The chain crosses the membrane as a helical span at residues Phe-274–Leu-288. His-332, Glu-333, Asp-342, and Ala-344 together coordinate [CaMn4O5] cluster. A propeptide spanning residues Ala-345 to Gly-359 is cleaved from the precursor.

The protein belongs to the reaction center PufL/M/PsbA/D family. As to quaternary structure, PSII is composed of 1 copy each of membrane proteins PsbA, PsbB, PsbC, PsbD, PsbE, PsbF, PsbH, PsbI, PsbJ, PsbK, PsbL, PsbM, PsbT, PsbX, PsbY, PsbZ, Psb30/Ycf12, peripheral proteins PsbO, CyanoQ (PsbQ), PsbU, PsbV and a large number of cofactors. It forms dimeric complexes. It depends on The D1/D2 heterodimer binds P680, chlorophylls that are the primary electron donor of PSII, and subsequent electron acceptors. It shares a non-heme iron and each subunit binds pheophytin, quinone, additional chlorophylls, carotenoids and lipids. D1 provides most of the ligands for the Mn4-Ca-O5 cluster of the oxygen-evolving complex (OEC). There is also a Cl(-1) ion associated with D1 and D2, which is required for oxygen evolution. The PSII complex binds additional chlorophylls, carotenoids and specific lipids. as a cofactor. Post-translationally, tyr-161 forms a radical intermediate that is referred to as redox-active TyrZ, YZ or Y-Z. C-terminally processed by CtpA; processing is essential to allow assembly of the oxygen-evolving complex and thus photosynthetic growth.

It localises to the cellular thylakoid membrane. The catalysed reaction is 2 a plastoquinone + 4 hnu + 2 H2O = 2 a plastoquinol + O2. Functionally, photosystem II (PSII) is a light-driven water:plastoquinone oxidoreductase that uses light energy to abstract electrons from H(2)O, generating O(2) and a proton gradient subsequently used for ATP formation. It consists of a core antenna complex that captures photons, and an electron transfer chain that converts photonic excitation into a charge separation. The D1/D2 (PsbA/PsbD) reaction center heterodimer binds P680, the primary electron donor of PSII as well as several subsequent electron acceptors. This chain is Photosystem II protein D1 2, found in Synechococcus sp. (strain CC9311).